The sequence spans 189 residues: Thymidine kinase (189 aa).

Residues 9–16 (GTMNSGKT) and 85–88 (DECQ) contribute to the ATP site. Glutamate 86 (proton acceptor) is an active-site residue. Residues cysteine 143, cysteine 146, cysteine 180, and histidine 183 each coordinate Zn(2+).

The protein belongs to the thymidine kinase family. As to quaternary structure, homotetramer.

It is found in the cytoplasm. It carries out the reaction thymidine + ATP = dTMP + ADP + H(+). The chain is Thymidine kinase from Streptococcus agalactiae serotype Ia (strain ATCC 27591 / A909 / CDC SS700).